Consider the following 156-residue polypeptide: Small ribosomal subunit protein uS7 (156 aa).

Belongs to the universal ribosomal protein uS7 family. Part of the 30S ribosomal subunit. Contacts proteins S9 and S11.

Functionally, one of the primary rRNA binding proteins, it binds directly to 16S rRNA where it nucleates assembly of the head domain of the 30S subunit. Is located at the subunit interface close to the decoding center, probably blocks exit of the E-site tRNA. This chain is Small ribosomal subunit protein uS7, found in Desulfovibrio desulfuricans (strain ATCC 27774 / DSM 6949 / MB).